Reading from the N-terminus, the 198-residue chain is Acireductone dioxygenase 2 (198 aa).

Residues histidine 99, histidine 101, glutamate 105, and histidine 144 each coordinate Fe(2+). Positions 99, 101, 105, and 144 each coordinate Ni(2+).

This sequence belongs to the acireductone dioxygenase (ARD) family. Requires Fe(2+) as cofactor. It depends on Ni(2+) as a cofactor. In terms of tissue distribution, ubiquitous.

The protein resides in the cytoplasm. Its subcellular location is the nucleus. It carries out the reaction 1,2-dihydroxy-5-(methylsulfanyl)pent-1-en-3-one + O2 = 4-methylsulfanyl-2-oxobutanoate + formate + 2 H(+). The enzyme catalyses 1,2-dihydroxy-5-(methylsulfanyl)pent-1-en-3-one + O2 = 3-(methylsulfanyl)propanoate + CO + formate + 2 H(+). Its pathway is amino-acid biosynthesis; L-methionine biosynthesis via salvage pathway; L-methionine from S-methyl-5-thio-alpha-D-ribose 1-phosphate: step 5/6. In terms of biological role, catalyzes 2 different reactions between oxygen and the acireductone 1,2-dihydroxy-3-keto-5-methylthiopentene (DHK-MTPene) depending upon the metal bound in the active site. Fe-containing acireductone dioxygenase (Fe-ARD) produces formate and 2-keto-4-methylthiobutyrate (KMTB), the alpha-ketoacid precursor of methionine in the methionine recycle pathway. Ni-containing acireductone dioxygenase (Ni-ARD) produces methylthiopropionate, carbon monoxide and formate, and does not lie on the methionine recycle pathway. This is Acireductone dioxygenase 2 (ARD2) from Oryza sativa subsp. indica (Rice).